The following is a 396-amino-acid chain: Ornithine aminotransferase 2 (396 aa).

Lys-255 carries the N6-(pyridoxal phosphate)lysine modification.

Belongs to the class-III pyridoxal-phosphate-dependent aminotransferase family. OAT subfamily. It depends on pyridoxal 5'-phosphate as a cofactor.

It is found in the cytoplasm. It catalyses the reaction a 2-oxocarboxylate + L-ornithine = L-glutamate 5-semialdehyde + an L-alpha-amino acid. It functions in the pathway amino-acid biosynthesis; L-proline biosynthesis; L-glutamate 5-semialdehyde from L-ornithine: step 1/1. Its function is as follows. Catalyzes the interconversion of ornithine to glutamate semialdehyde. In Staphylococcus aureus (strain COL), this protein is Ornithine aminotransferase 2.